Here is a 67-residue protein sequence, read N- to C-terminus: Teratocyte protein CftICK-II (67 aa).

The signal sequence occupies residues 1-25; it reads MVKSLLFAIGYLIFLLVTRVNVINA. Intrachain disulfides connect cysteine 28/cysteine 42, cysteine 35/cysteine 46, and cysteine 41/cysteine 57.

In terms of tissue distribution, abundantly expressed by teratocytes, which are extra-embryonic cells released by parasitoid wasps into their hosts during larval eclosion.

It localises to the secreted. This endoparasitoid wasp peptide has immununosuppressive, antimicrobial and insecticidal activities. Suppress cellular immunity which is detectable as a reduction of hemocyte encapsulation in the host. Shows moderate antifungal activity against C.albicans (MIC=4 ug/ml). In vivo, ingestion of this peptide (probably at excessive doses) increases larval mortality and reduces leaf consumption of D.saccharalis, a permissive host for C.flavipes. This is Teratocyte protein CftICK-II from Cotesia flavipes (Parasitic wasp).